Reading from the N-terminus, the 134-residue chain is Agouti-related protein (134 aa).

Positions 1–20 (MLTTMLLSCALLLAMPTMLG) are cleaved as a signal peptide. Residues 21–84 (AQIGLAPLEG…VLDPEGRKAR (64 aa)) constitute a propeptide that is removed on maturation. Disulfide bonds link C89–C104, C96–C110, C103–C121, C107–C131, and C112–C119. The region spanning 89-131 (CVRLHESCLGHQVPCCDPCATCYCRFFNAFCYCRKLGTATNPC) is the Agouti domain. An interaction with melanocortin receptors region spans residues 113–115 (RFF).

As to quaternary structure, interacts with melanocortin receptors MC3R, MC4R and MC5R.

The protein localises to the secreted. Its subcellular location is the golgi apparatus lumen. Plays a role in weight homeostasis. Involved in the control of feeding behavior through the central melanocortin system. Acts as alpha melanocyte-stimulating hormone antagonist by inhibiting cAMP production mediated by stimulation of melanocortin receptors within the hypothalamus and adrenal gland. Has very low activity with MC5R. Is an inverse agonist for MC3R and MC4R being able to suppress their constitutive activity. It promotes MC3R and MC4R endocytosis in an arrestin-dependent manner. This chain is Agouti-related protein (AGRP), found in Sus scrofa (Pig).